The chain runs to 860 residues: Leucine--tRNA ligase (860 aa).

Residues 42 to 52 (PYPSGRLHMGH) carry the 'HIGH' region motif. The 'KMSKS' region signature appears at 619 to 623 (KMSKS). Residue K622 coordinates ATP.

This sequence belongs to the class-I aminoacyl-tRNA synthetase family.

It is found in the cytoplasm. It carries out the reaction tRNA(Leu) + L-leucine + ATP = L-leucyl-tRNA(Leu) + AMP + diphosphate. This Proteus mirabilis (strain HI4320) protein is Leucine--tRNA ligase.